The sequence spans 294 residues: Aquaporin NIP1-2 (294 aa).

An N-acetylmethionine modification is found at methionine 1. Helical transmembrane passes span 54–74 (LMAEVLGTYFLIFAGCAAVAV) and 82–102 (VTLPGIAIVWGLTVMVLVYSL). The short motif at 111–113 (NPA) is the NPA 1 element. 3 helical membrane passes run 133-153 (VISQVIGSTLAAATLRLLFGL), 177-197 (SFVIEFIITFYLMFVISGVAT), and 201-221 (AIGELAGLAVGSTVLLNVIIA). The short motif at 230-232 (NPG) is the NPA 2 element. A helical membrane pass occupies residues 248 to 268 (WIYIVSPIVGAVSGAWVYNMV). At serine 283 the chain carries Phosphoserine.

It belongs to the MIP/aquaporin (TC 1.A.8) family. NIP (TC 1.A.8.12) subfamily. Expressed in developing seeds.

Its subcellular location is the membrane. Water channel probably required to promote glycerol permeability and water transport across cell membranes. The chain is Aquaporin NIP1-2 (NIP1-2) from Arabidopsis thaliana (Mouse-ear cress).